We begin with the raw amino-acid sequence, 830 residues long: Periplasmic nitrate reductase (830 aa).

Residues 1 to 32 (MELNRRDFMKANAAVAAAAAAGITIPVKNVHA) constitute a signal peptide (tat-type signal). The 57-residue stretch at 39–95 (IRWDKAPCRYCGTGCSVLVGTKDGRVVATQGDPDAEVNRGLNCIKGYFLSKIMYGAD) folds into the 4Fe-4S Mo/W bis-MGD-type domain. Positions 46, 49, 53, and 81 each coordinate [4Fe-4S] cluster. Mo-bis(molybdopterin guanine dinucleotide)-binding positions include Lys-83, Gln-151, Asn-176, Cys-180, 213-220 (WGSNMAEM), 244-248 (STFEH), Met-374, Gln-378, Asn-484, 510-511 (SD), Lys-533, Asp-560, and 720-729 (TGRVLEHWHT). Phe-796 serves as a coordination point for substrate. Mo-bis(molybdopterin guanine dinucleotide) is bound by residues Asn-804 and Lys-821.

Belongs to the prokaryotic molybdopterin-containing oxidoreductase family. NasA/NapA/NarB subfamily. As to quaternary structure, component of the periplasmic nitrate reductase NapAB complex composed of NapA and NapB. It depends on [4Fe-4S] cluster as a cofactor. Mo-bis(molybdopterin guanine dinucleotide) serves as cofactor. In terms of processing, predicted to be exported by the Tat system. The position of the signal peptide cleavage has not been experimentally proven.

The protein localises to the periplasm. It carries out the reaction 2 Fe(II)-[cytochrome] + nitrate + 2 H(+) = 2 Fe(III)-[cytochrome] + nitrite + H2O. In terms of biological role, catalytic subunit of the periplasmic nitrate reductase complex NapAB. Receives electrons from NapB and catalyzes the reduction of nitrate to nitrite. The chain is Periplasmic nitrate reductase from Mannheimia succiniciproducens (strain KCTC 0769BP / MBEL55E).